The following is a 194-amino-acid chain: E3 ubiquitin-protein ligase RNF185 (194 aa).

Residues 1-32 are disordered; sequence MASKGPTTSASTKSSSTGGTSGSSSSNGAGDN. The required for ubiquitin ligase activity and protection against ER stress-induced cell death stretch occupies residues 31 to 82; sequence DNTNQDNTFECNICLDTAKDAVISLCGHLFCWPCLHQWLETRPNRQVCPVCK. The RING-type zinc finger occupies 41–82; the sequence is CNICLDTAKDAVISLCGHLFCWPCLHQWLETRPNRQVCPVCK. Residues 92–125 form a disordered region; that stretch reads PLYGRGSTGQQDPREKTPPRPQGQRPEPENRGGF. 2 helical membrane passes run 133-153 and 174-194; these read GGFQ…ATAF and QFLS…LLIA.

It is found in the mitochondrion outer membrane. Its subcellular location is the endoplasmic reticulum membrane. It carries out the reaction S-ubiquitinyl-[E2 ubiquitin-conjugating enzyme]-L-cysteine + [acceptor protein]-L-lysine = [E2 ubiquitin-conjugating enzyme]-L-cysteine + N(6)-ubiquitinyl-[acceptor protein]-L-lysine.. It participates in protein modification; protein ubiquitination. In terms of biological role, E3 ubiquitin-protein ligase that regulates selective mitochondrial autophagy by mediating 'Lys-63'-linked polyubiquitination. Acts in the endoplasmic reticulum (ER)-associated degradation (ERAD) pathway, which targets misfolded proteins that accumulate in the endoplasmic reticulum (ER) for ubiquitination and subsequent proteasome-mediated degradation. Protects cells from ER stress-induced apoptosis. Responsible for the cotranslational ubiquitination and degradation of CFTR in the ERAD pathway. Also acts as a regulator of the innate antiviral response by catalyzing 'Lys-27'-linked polyubiquitination of CGAS, thereby promoting CGAS cyclic GMP-AMP synthase activity. Preferentially associates with the E2 enzymes UBE2J1 and UBE2J2. This is E3 ubiquitin-protein ligase RNF185 (RNF185) from Gallus gallus (Chicken).